Here is a 1136-residue protein sequence, read N- to C-terminus: Solute carrier family 12 member 2 (1136 aa).

2 disordered regions span residues methionine 1 to glycine 73 and proline 91 to histidine 121. Topologically, residues methionine 1 to glycine 208 are cytoplasmic. Phosphothreonine occurs at positions 125, 129, 134, 139, and 152. A discontinuously helical transmembrane segment spans residues tryptophan 209–valine 234. Leucine 219 is a Na(+) binding site. 2 residues coordinate K(+): asparagine 220 and isoleucine 221. Residue tryptophan 222 participates in Na(+) binding. Residues glycine 223, valine 224, and methionine 225 each contribute to the chloride site. Over glycine 235–glycine 238 the chain is Extracellular. A helical membrane pass occupies residues isoleucine 239 to serine 261. Residues alanine 262–glutamate 285 lie on the Cytoplasmic side of the membrane. Residues phenylalanine 286–valine 314 form a helical membrane-spanning segment. Phenylalanine 294 provides a ligand contact to chloride. Residue tyrosine 305 participates in K(+) binding. Residues glutamate 315–glutamine 327 lie on the Extracellular side of the membrane. The next 2 helical transmembrane spans lie at threonine 328–glutamate 351 and tryptophan 352–phenylalanine 376. At isoleucine 377–threonine 407 the chain is on the extracellular side. Residues phenylalanine 408–asparagine 427 traverse the membrane as a discontinuously helical segment. The K(+) site is built by proline 417, alanine 418, and threonine 420. Chloride-binding residues include proline 417 and alanine 418. Positions 421 and 422 each coordinate chloride. The Cytoplasmic portion of the chain corresponds to isoleucine 428–alanine 438. Residues isoleucine 439–glycine 462 traverse the membrane as a helical segment. At alanine 463–glycine 523 the chain is on the extracellular side. N-linked (GlcNAc...) asparagine glycosylation is found at asparagine 475 and asparagine 481. Residues cysteine 496 and cysteine 507 are joined by a disulfide bond. A helical transmembrane segment spans residues phenylalanine 524 to phenylalanine 551. Na(+)-binding residues include alanine 535, serine 538, and serine 539. Topologically, residues glutamine 552–proline 576 are cytoplasmic. Helical transmembrane passes span leucine 577–glutamate 595 and leucine 596–phenylalanine 619. 2 residues coordinate chloride: phenylalanine 607 and tyrosine 611. Over histidine 620–tyrosine 636 the chain is Cytoplasmic. The next 2 helical transmembrane spans lie at asparagine 637–asparagine 656 and tryptophan 657–isoleucine 672. The Cytoplasmic portion of the chain corresponds to tyrosine 673–serine 1136. The tract at residues alanine 689–leucine 702 is scissor helix. Residues serine 875–proline 921 are disordered. The residue at position 1059 (threonine 1059) is a Phosphothreonine.

The protein belongs to the SLC12A transporter family. Homodimer; adopts a domain-swap conformation at the scissor helices connecting the transmembrane domain and C-terminal domain. In terms of processing, phosphorylated at Thr-125, Thr-129 and Thr-134 by OXSR1/OSR1 and STK39/SPAK downstream of WNK kinases (WNK1, WNK2, WNK3 or WNK4), promoting its activity.

The protein localises to the basolateral cell membrane. It catalyses the reaction K(+)(out) + 2 chloride(out) + Na(+)(out) = K(+)(in) + 2 chloride(in) + Na(+)(in). Activated following phosphorylation by OXSR1/OSR1 and STK39/SPAK. Inhibited by bumetanide. In terms of biological role, cation-chloride cotransporter which mediates the electroneutral transport of chloride, potassium and/or sodium ions across the membrane. Plays a vital role in the regulation of ionic balance and cell volume. Important for maintenance of endolymph volume in the otic vesicle, probably by regulating ion homeostasis. Also plays a role in normal development of the swim bladder. In Danio rerio (Zebrafish), this protein is Solute carrier family 12 member 2.